Here is a 152-residue protein sequence, read N- to C-terminus: Interleukin-2 (152 aa).

Residues 1–20 (MYRMQLLSCIALTLALVANG) form the signal peptide. Threonine 23 is a glycosylation site (O-linked (GalNAc...) threonine). Cysteine 78 and cysteine 126 form a disulfide bridge.

This sequence belongs to the IL-2 family.

It is found in the secreted. Its function is as follows. Cytokine produced by activated CD4-positive helper T-cells and to a lesser extend activated CD8-positive T-cells and natural killer (NK) cells that plays pivotal roles in the immune response and tolerance. Binds to a receptor complex composed of either the high-affinity trimeric IL-2R (IL2RA/CD25, IL2RB/CD122 and IL2RG/CD132) or the low-affinity dimeric IL-2R (IL2RB and IL2RG). Interaction with the receptor leads to oligomerization and conformation changes in the IL-2R subunits resulting in downstream signaling starting with phosphorylation of JAK1 and JAK3. In turn, JAK1 and JAK3 phosphorylate the receptor to form a docking site leading to the phosphorylation of several substrates including STAT5. This process leads to activation of several pathways including STAT, phosphoinositide-3-kinase/PI3K and mitogen-activated protein kinase/MAPK pathways. Functions as a T-cell growth factor and can increase NK-cell cytolytic activity as well. Promotes strong proliferation of activated B-cells and subsequently immunoglobulin production. Plays a pivotal role in regulating the adaptive immune system by controlling the survival and proliferation of regulatory T-cells, which are required for the maintenance of immune tolerance. Moreover, participates in the differentiation and homeostasis of effector T-cell subsets, including Th1, Th2, Th17 as well as memory CD8-positive T-cells. The chain is Interleukin-2 (IL2) from Orcinus orca (Killer whale).